A 1371-amino-acid polypeptide reads, in one-letter code: Perilipin-4 (1371 aa).

Positions 1–13 (MSAPDEGRRDPPK) are enriched in basic and acidic residues. A disordered region spans residues 1–22 (MSAPDEGRRDPPKPKGKTLGSF). S25 and S31 each carry phosphoserine. Residues 37–86 (ANAHSSARARPAADPTGAPAAEAAQPQAQVAAHPEQTAPWTEKELQPSEK) form a disordered region. A compositionally biased stretch (low complexity) spans 44–72 (RARPAADPTGAPAAEAAQPQAQVAAHPEQ). 27 tandem repeats follow at residues 109 to 141 (GVASVVDVAKGVVQGGLDTTRSALTGTKEVVSS), 142 to 174 (GVTGAMDMAKGAVQGGLDTSKAVLTGTKDTVST), 175 to 207 (GLTGAVNVAKGTVQAGVDTTKTVLTGTKDTVTT), 208 to 240 (GVMGAVNLAKGTVQTGVETSKAVLTGTKDAVST), 241 to 273 (GLTGAVNVARGSIQTGVDTSKTVLTGTKDTVCS), 274 to 306 (GVTGAMNVAKGTIQTGVDTSKTVLTGTKDTVCS), 307 to 339 (GVTGAMNVAKGTIQTGVDTSKTVLTGTKDTVCS), 340 to 372 (GVTGAMNVAKGTIQTGVDTTKTVLTGTKNTVCS), 373 to 405 (GVTGAVNLAKEAIQGGLDTTKSMVMGTKDTMST), 406 to 438 (GLTGAANVAKGAMQTGLNTTQNIATGTKDTVCS), 439 to 471 (GVTGAMNLARGTIQTGVDTTKIVLTGTKDTVCS), 472 to 504 (GVTGAANVAKGAVQGGLDTTKSVLTGTKDAVST), 505 to 537 (GLTGAVNVAKGTVQTGVDTTKTVLTGTKDTVCS), 538 to 570 (GVTSAVNVAKGAVQGGLDTTKSVVIGTKDTMST), 571 to 603 (GLTGAANVAKGAVQTGVDTAKTVLTGTKDTVTT), 604 to 636 (GLVGAVNVAKGTVQTGMDTTKTVLTGTKDTIYS), 637 to 669 (GVTSAVNVAKGAVQTGLKTTQNIATGTKNTFGS), 670 to 702 (GVTSAVNVAKGAAQTGVDTAKTVLTGTKDTVTT), 703 to 735 (GLMGAVNVAKGTVQTSVDTTKTVLTGTKDTVCS), 736 to 768 (GVTGAANVAKGAIQGGLDTTKSVLTGTKDAVST), 769 to 801 (GLTGAVKLAKGTVQTGMDTTKTVLTGTKDAVCS), 802 to 834 (GVTGAANVAKGAVQMGVDTAKTVLTGTKDTVCS), 835 to 867 (GVTGAANVAKGAVQTGLKTTQNIATGTKNTLGS), 868 to 900 (GVTGAAKVAKGAVQGGLDTTKSVLTGTKDAVST), 901 to 933 (GLTGAVNLAKGTVQTGVDTSKTVLTGTKDTVCS), 934 to 966 (GVTGAVNVAKGTVQTGVDTAKTVLSGAKDAVTT), and 967 to 999 (GVTGAVNVAKGTVQTGVDASKAVLMGTKDTVFS). The interval 109–999 (GVASVVDVAK…LMGTKDTVFS (891 aa)) is 27 X 33 AA approximate tandem repeat. Residues 1060-1083 (PATSWGGLTSSRTTDNGGEQTALS) are compositionally biased toward polar residues. 2 disordered regions span residues 1060–1093 (PATSWGGLTSSRTTDNGGEQTALSPQEAPFSGIS) and 1240–1260 (QAPEGQPRLDQGSGASAEDAA).

This sequence belongs to the perilipin family.

Its subcellular location is the cell membrane. It localises to the cytoplasm. The protein localises to the lipid droplet. Its function is as follows. May play a role in triacylglycerol packaging into adipocytes. May function as a coat protein involved in the biogenesis of lipid droplets. The protein is Perilipin-4 of Homo sapiens (Human).